We begin with the raw amino-acid sequence, 225 residues long: E3 ubiquitin-protein ligase ATL59 (225 aa).

The chain crosses the membrane as a helical span at residues 22 to 42; that stretch reads FTFIVCVPICVILIVLLVLYI. The RING-type; atypical zinc finger occupies 97–139; the sequence is CSVCLGDYQAEEKLQQMPSCGHTFHMECIDLWLTSHTTCPLCR.

It belongs to the RING-type zinc finger family. ATL subfamily.

The protein localises to the membrane. The catalysed reaction is S-ubiquitinyl-[E2 ubiquitin-conjugating enzyme]-L-cysteine + [acceptor protein]-L-lysine = [E2 ubiquitin-conjugating enzyme]-L-cysteine + N(6)-ubiquitinyl-[acceptor protein]-L-lysine.. The protein operates within protein modification; protein ubiquitination. Functionally, E3 ubiquitin-protein ligase able to catalyze polyubiquitination with ubiquitin-conjugating enzyme E2 UBC8, UBC10, UBC11, and UBC34 in vitro. This chain is E3 ubiquitin-protein ligase ATL59 (ATL59), found in Arabidopsis thaliana (Mouse-ear cress).